The following is a 663-amino-acid chain: UvrABC system protein B (663 aa).

The Helicase ATP-binding domain occupies 26–183; the sequence is DGLESGLAKQ…KRLAEMQYTR (158 aa). ATP is bound at residue 39 to 46; it reads GVTGSGKT. A Beta-hairpin motif is present at residues 92 to 115; sequence YYDYYQPEAYVPASDTFIEKDASI. In terms of domain architecture, Helicase C-terminal spans 430 to 596; sequence QVDDLMSEIR…GINKSVEDIL (167 aa). Positions 624–659 constitute a UVR domain; that stretch reads AKQINALEKQMYAHAQNMEFELAAKIRDEYLLLKEQ.

This sequence belongs to the UvrB family. In terms of assembly, forms a heterotetramer with UvrA during the search for lesions. Interacts with UvrC in an incision complex.

The protein resides in the cytoplasm. In terms of biological role, the UvrABC repair system catalyzes the recognition and processing of DNA lesions. A damage recognition complex composed of 2 UvrA and 2 UvrB subunits scans DNA for abnormalities. Upon binding of the UvrA(2)B(2) complex to a putative damaged site, the DNA wraps around one UvrB monomer. DNA wrap is dependent on ATP binding by UvrB and probably causes local melting of the DNA helix, facilitating insertion of UvrB beta-hairpin between the DNA strands. Then UvrB probes one DNA strand for the presence of a lesion. If a lesion is found the UvrA subunits dissociate and the UvrB-DNA preincision complex is formed. This complex is subsequently bound by UvrC and the second UvrB is released. If no lesion is found, the DNA wraps around the other UvrB subunit that will check the other stand for damage. The protein is UvrABC system protein B of Legionella pneumophila (strain Corby).